A 463-amino-acid polypeptide reads, in one-letter code: Kynurenine 3-monooxygenase (463 aa).

Belongs to the aromatic-ring hydroxylase family. KMO subfamily. FAD is required as a cofactor.

It localises to the mitochondrion outer membrane. It carries out the reaction L-kynurenine + NADPH + O2 + H(+) = 3-hydroxy-L-kynurenine + NADP(+) + H2O. The protein operates within cofactor biosynthesis; NAD(+) biosynthesis; quinolinate from L-kynurenine: step 1/3. Its function is as follows. Catalyzes the hydroxylation of L-kynurenine (L-Kyn) to form 3-hydroxy-L-kynurenine (L-3OHKyn). Required for synthesis of quinolinic acid. The protein is Kynurenine 3-monooxygenase of Yarrowia lipolytica (strain CLIB 122 / E 150) (Yeast).